The primary structure comprises 224 residues: Putative homeobox protein R749 (224 aa).

A disordered region spans residues 139 to 162 (KTKTIKKSTSEKKTSPKKKTTSQQ). The segment at residues 161-220 (QQIKRVRLSDEERNILESQYSKNNFPSPEIRDELAKKIGKTPRQVQIWFQNKRCKDRKNL) is a DNA-binding region (homeobox).

It is found in the host nucleus. The sequence is that of Putative homeobox protein R749 from Acanthamoeba polyphaga mimivirus (APMV).